A 56-amino-acid chain; its full sequence is Large ribosomal subunit protein bL32 (56 aa).

Residues 1–37 form a disordered region; sequence MAVQQNKKSRSRRDMRRSHDALTTAAISVDKASGEKH. Residues 7–16 are compositionally biased toward basic residues; that stretch reads KKSRSRRDMR.

Belongs to the bacterial ribosomal protein bL32 family.

In Pasteurella multocida (strain Pm70), this protein is Large ribosomal subunit protein bL32 (rpmF).